We begin with the raw amino-acid sequence, 193 residues long: Holliday junction branch migration complex subunit RuvA (193 aa).

Positions 1 to 64 are domain I; it reads MIGRIAGTLI…EDAHLLYGFG (64 aa). The tract at residues 65 to 143 is domain II; the sequence is TASERNTFRE…AELGHVPGTP (79 aa). Residues 144-151 form a flexible linker region; the sequence is AVPDSAVD. The interval 151 to 193 is domain III; the sequence is DVLNALLALGYSEKEAAAAIKQVPAGTGVSDGIKLALKALSKA.

Belongs to the RuvA family. As to quaternary structure, homotetramer. Forms an RuvA(8)-RuvB(12)-Holliday junction (HJ) complex. HJ DNA is sandwiched between 2 RuvA tetramers; dsDNA enters through RuvA and exits via RuvB. An RuvB hexamer assembles on each DNA strand where it exits the tetramer. Each RuvB hexamer is contacted by two RuvA subunits (via domain III) on 2 adjacent RuvB subunits; this complex drives branch migration. In the full resolvosome a probable DNA-RuvA(4)-RuvB(12)-RuvC(2) complex forms which resolves the HJ.

It is found in the cytoplasm. Functionally, the RuvA-RuvB-RuvC complex processes Holliday junction (HJ) DNA during genetic recombination and DNA repair, while the RuvA-RuvB complex plays an important role in the rescue of blocked DNA replication forks via replication fork reversal (RFR). RuvA specifically binds to HJ cruciform DNA, conferring on it an open structure. The RuvB hexamer acts as an ATP-dependent pump, pulling dsDNA into and through the RuvAB complex. HJ branch migration allows RuvC to scan DNA until it finds its consensus sequence, where it cleaves and resolves the cruciform DNA. The polypeptide is Holliday junction branch migration complex subunit RuvA (Cupriavidus necator (strain ATCC 17699 / DSM 428 / KCTC 22496 / NCIMB 10442 / H16 / Stanier 337) (Ralstonia eutropha)).